We begin with the raw amino-acid sequence, 97 residues long: MLTREEVQHVAHLARLELTEEEEIQFTEQLADILAYVEQLKELDTEGVEPTFHVLDAELPTRPDQVEPYPNIEGILANAPDRADMFFKVPRILEGED.

Belongs to the GatC family. In terms of assembly, heterotrimer of A, B and C subunits.

The enzyme catalyses L-glutamyl-tRNA(Gln) + L-glutamine + ATP + H2O = L-glutaminyl-tRNA(Gln) + L-glutamate + ADP + phosphate + H(+). It carries out the reaction L-aspartyl-tRNA(Asn) + L-glutamine + ATP + H2O = L-asparaginyl-tRNA(Asn) + L-glutamate + ADP + phosphate + 2 H(+). Its function is as follows. Allows the formation of correctly charged Asn-tRNA(Asn) or Gln-tRNA(Gln) through the transamidation of misacylated Asp-tRNA(Asn) or Glu-tRNA(Gln) in organisms which lack either or both of asparaginyl-tRNA or glutaminyl-tRNA synthetases. The reaction takes place in the presence of glutamine and ATP through an activated phospho-Asp-tRNA(Asn) or phospho-Glu-tRNA(Gln). The chain is Aspartyl/glutamyl-tRNA(Asn/Gln) amidotransferase subunit C from Synechococcus sp. (strain JA-3-3Ab) (Cyanobacteria bacterium Yellowstone A-Prime).